The primary structure comprises 327 residues: MHTAIIAGITTFILTIIGIPAFIRFYQKARISGQQMHEDVKQHQAKAGTPTMGGTVFLLASIVASFVIALFSGNLSSNVTTILFILFLYGLVGFLDDFLKVFRRINEGLNPKQKLFLQLVGGVVFYLFFERHGGGDMLNVFGFPLELGFLYIFFVLFWLVGFSNAVNLTDGIDGLASISVVISLGAYAVIALEQKRFDLLIVIFSMIGGLLGFFGFNHKPAKIFMGDVGSLALGGMLAALSIALHQEWTLLLIGIVYVFETASVMLQVTYFKMTGGKRIFRMTPVHHHFELGGFSGRGKAWSEWKVDFLFWGIGLVASLITLAILYL.

10 consecutive transmembrane segments (helical) span residues 3-23 (TAIIAGITTFILTIIGIPAFI), 51-71 (TMGGTVFLLASIVASFVIALF), 79-99 (VTTILFILFLYGLVGFLDDFL), 115-135 (LFLQLVGGVVFYLFFERHGGG), 140-160 (VFGFPLELGFLYIFFVLFWLV), 172-192 (IDGLASISVVISLGAYAVIAL), 197-217 (FDLLIVIFSMIGGLLGFFGFN), 223-243 (IFMGDVGSLALGGMLAALSIA), 248-268 (WTLLLIGIVYVFETASVMLQV), and 306-326 (VDFLFWGIGLVASLITLAILY).

Belongs to the glycosyltransferase 4 family. MraY subfamily. Mg(2+) serves as cofactor.

The protein localises to the cell membrane. The enzyme catalyses UDP-N-acetyl-alpha-D-muramoyl-L-alanyl-gamma-D-glutamyl-L-lysyl-D-alanyl-D-alanine + di-trans,octa-cis-undecaprenyl phosphate = Mur2Ac(oyl-L-Ala-gamma-D-Glu-L-Lys-D-Ala-D-Ala)-di-trans,octa-cis-undecaprenyl diphosphate + UMP. The protein operates within cell wall biogenesis; peptidoglycan biosynthesis. Functionally, catalyzes the initial step of the lipid cycle reactions in the biosynthesis of the cell wall peptidoglycan: transfers peptidoglycan precursor phospho-MurNAc-pentapeptide from UDP-MurNAc-pentapeptide onto the lipid carrier undecaprenyl phosphate, yielding undecaprenyl-pyrophosphoryl-MurNAc-pentapeptide, known as lipid I. This Streptococcus gordonii (strain Challis / ATCC 35105 / BCRC 15272 / CH1 / DL1 / V288) protein is Phospho-N-acetylmuramoyl-pentapeptide-transferase.